Reading from the N-terminus, the 153-residue chain is Ribosomal RNA large subunit methyltransferase H (153 aa).

S-adenosyl-L-methionine-binding positions include Leu-70, Gly-102, and 121–126 (FSKMTF).

The protein belongs to the RNA methyltransferase RlmH family. Homodimer.

It localises to the cytoplasm. The catalysed reaction is pseudouridine(1915) in 23S rRNA + S-adenosyl-L-methionine = N(3)-methylpseudouridine(1915) in 23S rRNA + S-adenosyl-L-homocysteine + H(+). Specifically methylates the pseudouridine at position 1915 (m3Psi1915) in 23S rRNA. The sequence is that of Ribosomal RNA large subunit methyltransferase H from Desulfotalea psychrophila (strain LSv54 / DSM 12343).